The following is a 258-amino-acid chain: MENTAQAVKSKIEVKNLNFYYGKFHAIRNVNMSIRENKVTAFIGPSGCGKSTLLRTFNRMFELYPGQRAEGEILLDGENLLTSKTDISLIRAKVGMVFQKPTPFPMSIYDNIAFGVRLFERLSKGEMDERVEWALSKAALWNEVKDKIHQSGNSLSGGQQQRLCIARGVAIKPEVLLLDEPCSALDPISTAKIEELIAELKHEYTVVIVTHNMQQAARCSDYTAYMYLGELMEFGATDQIFVKPARKETEDYITGRFG.

Residues Ile12 to Ile253 enclose the ABC transporter domain. Residue Gly44–Ser51 participates in ATP binding.

The protein belongs to the ABC transporter superfamily. Phosphate importer (TC 3.A.1.7) family. In terms of assembly, the complex is composed of two ATP-binding proteins (PstB), two transmembrane proteins (PstC and PstA) and a solute-binding protein (PstS).

The protein resides in the cell inner membrane. It catalyses the reaction phosphate(out) + ATP + H2O = ADP + 2 phosphate(in) + H(+). In terms of biological role, part of the ABC transporter complex PstSACB involved in phosphate import. Responsible for energy coupling to the transport system. In Bordetella avium (strain 197N), this protein is Phosphate import ATP-binding protein PstB.